We begin with the raw amino-acid sequence, 207 residues long: Probable GTP-binding protein EngB (207 aa).

Residues 23-197 (AGIEVVFAGR…ETVIGRWLFA (175 aa)) form the EngB-type G domain. GTP-binding positions include 31-38 (GRSNAGKS), 58-62 (GRTQL), 76-79 (DLPG), 143-146 (TKAD), and 176-178 (FSS). Positions 38 and 60 each coordinate Mg(2+).

The protein belongs to the TRAFAC class TrmE-Era-EngA-EngB-Septin-like GTPase superfamily. EngB GTPase family. It depends on Mg(2+) as a cofactor.

In terms of biological role, necessary for normal cell division and for the maintenance of normal septation. The protein is Probable GTP-binding protein EngB of Methylobacillus flagellatus (strain ATCC 51484 / DSM 6875 / VKM B-1610 / KT).